We begin with the raw amino-acid sequence, 449 residues long: Allantoinase (449 aa).

Residues histidine 61, histidine 63, lysine 148, histidine 184, histidine 240, and aspartate 313 each contribute to the Zn(2+) site. The residue at position 148 (lysine 148) is an N6-carboxylysine.

It belongs to the metallo-dependent hydrolases superfamily. Allantoinase family. In terms of assembly, homotetramer. Zn(2+) is required as a cofactor. Post-translationally, carboxylation allows a single lysine to coordinate two zinc ions.

The enzyme catalyses (S)-allantoin + H2O = allantoate + H(+). The protein operates within nitrogen metabolism; (S)-allantoin degradation; allantoate from (S)-allantoin: step 1/1. Its function is as follows. Catalyzes the conversion of allantoin (5-ureidohydantoin) to allantoic acid by hydrolytic cleavage of the five-member hydantoin ring. The protein is Allantoinase of Desulfitobacterium hafniense (strain Y51).